The sequence spans 547 residues: Chorismate synthase (547 aa).

Residues H17, H104, and D500 contribute to the active site.

The protein belongs to the chorismate synthase family.

The protein resides in the cytoplasm. It localises to the cytosol. The catalysed reaction is 5-O-(1-carboxyvinyl)-3-phosphoshikimate = chorismate + phosphate. The enzyme catalyses FMNH2 + NADP(+) = FMN + NADPH + 2 H(+). The protein operates within metabolic intermediate biosynthesis; chorismate biosynthesis; chorismate from D-erythrose 4-phosphate and phosphoenolpyruvate: step 7/7. Functionally, bifunctional chorismate synthase and flavin reductase. Catalyzes the conversion of 5-enolpyruvylshikimate 3-phosphate (EPSP) to form chorismate. Acts also as a flavin reductase (FR) able to generate reduced flavin mononucleotide in the presence of NADPH. In Plasmodium vivax (strain Salvador I), this protein is Chorismate synthase.